The primary structure comprises 242 residues: Lectin-like protein At1g53060 (242 aa).

The legume-lectin like stretch occupies residues 3–237 (FHGDAEYASE…RHEILDWSFE (235 aa)). A Phosphoserine modification is found at S207.

Belongs to the leguminous lectin family.

In Arabidopsis thaliana (Mouse-ear cress), this protein is Lectin-like protein At1g53060.